A 247-amino-acid polypeptide reads, in one-letter code: ATP synthase subunit a, chloroplastic (247 aa).

5 consecutive transmembrane segments (helical) span residues 38-58, 95-115, 134-154, 199-219, and 220-240; these read QVLI…TLAV, VPFI…GALL, INTT…AGIS, LVVV…VMFL, and GLFT…AYIG.

The protein belongs to the ATPase A chain family. As to quaternary structure, F-type ATPases have 2 components, CF(1) - the catalytic core - and CF(0) - the membrane proton channel. CF(1) has five subunits: alpha(3), beta(3), gamma(1), delta(1), epsilon(1). CF(0) has four main subunits: a, b, b' and c.

Its subcellular location is the plastid. It localises to the chloroplast thylakoid membrane. In terms of biological role, key component of the proton channel; it plays a direct role in the translocation of protons across the membrane. This Daucus carota (Wild carrot) protein is ATP synthase subunit a, chloroplastic.